Reading from the N-terminus, the 840-residue chain is E3 ubiquitin-protein ligase SH3RF1 (840 aa).

The RING-type zinc-finger motif lies at 12 to 53 (CPVCLERLDASAKVLPCQHTFCKRCLLGIVGSRNELRCPECR). A disordered region spans residues 105-129 (VTCSPKDGPSSQGGPQPRAQAWSPP). SH3 domains are found at residues 134-193 (PQLP…IIKP) and 196-259 (QPPP…FNSA). Disordered regions lie at residues 267 to 324 (DQPP…RHSM), 394 to 442 (TLNP…PRPS), 516 to 545 (GPAS…VAGG), 578 to 633 (QARS…AASG), 652 to 723 (AASL…LGAE), and 744 to 773 (MAPG…SLGP). The span at 273 to 282 (GVAAGEGALA) shows a compositional bias: low complexity. A compositionally biased stretch (polar residues) spans 283-292 (TTPSSTTTKQ). The tract at residues 292–362 (QPDGKKNTKK…APSQVHISTT (71 aa)) is interaction with RAC1. Ser304 is modified (phosphoserine). Low complexity-rich tracts occupy residues 307 to 320 (SLSM…AAQQ) and 405 to 424 (QAAT…GPRP). Positions 434-537 (HPRPQPRPSV…PSTGGPAQKP (104 aa)) are interaction with AKT2. One can recognise an SH3 3 domain in the interval 439 to 500 (PRPSVYVAIY…PGNYVAPVTR (62 aa)). The segment covering 616–625 (SPQPPAPLGP) has biased composition (pro residues). Over residues 681 to 692 (RPDKDGKKEKKG) the composition is skewed to basic and acidic residues. Ser709 bears the Phosphoserine mark. The 60-residue stretch at 781–840 (AVCERHRVVVSYPPQSEAELELKEGDIVFVHKKREDGWFKGTLQRNGKTGLFPGSFVENI) folds into the SH3 4 domain.

It belongs to the SH3RF family. In terms of assembly, interacts with RAC1; in a GTP-dependent manner. Interacts with MAP3K10/MLK2 and MAP3K11/MLK3. Interacts with MAPK8IP; this interaction leads to the PJAC complex (POSH-JIP or SH3RF1/MAPK8IP apoptotic complex) with a 1:1 ratio. Interacts with SIAH1. Interacts with HERP1. Probably part of a signaling complex that may contain SH3RF1, MAPK8IP, DLK1, MAP2K4/MKK4, MAP2K7/MKK7, MAPK8/JNK1, MAPK9/JNK2, AKT1 and AKT2. Found in a complex with RAC2, MAP3K7/TAK1, MAP2K7/MKK7, MAPK8IP1/JIP1, MAPK8/JNK1 and MAPK9/JNK2. Found in a complex with RAC1, MAP3K11/MLK3, MAP2K7/MKK7, MAPK8IP1/JIP1 and MAPK8/JNK1. Interacts with SH3RF2. Post-translationally, phosphorylated at Ser-304 by AKT1 and AKT2. When phosphorylated, it has reduced ability to bind Rac. In terms of processing, autoubiquitinated. Ubiquitinated by SH3RF2, leading to proteasome-mediated degradation.

The protein localises to the cytoplasm. It localises to the perinuclear region. The protein resides in the cell projection. It is found in the lamellipodium. Its subcellular location is the golgi apparatus. The protein localises to the trans-Golgi network. It carries out the reaction S-ubiquitinyl-[E2 ubiquitin-conjugating enzyme]-L-cysteine + [acceptor protein]-L-lysine = [E2 ubiquitin-conjugating enzyme]-L-cysteine + N(6)-ubiquitinyl-[acceptor protein]-L-lysine.. It participates in protein modification; protein ubiquitination. Has E3 ubiquitin-protein ligase activity. In the absence of an external substrate, it can catalyze self-ubiquitination. Stimulates ubiquitination of potassium channel KCNJ1, enhancing it's dynamin-dependent and clathrin-independent endocytosis. Acts as a scaffold protein that coordinates with MAPK8IP1/JIP1 in organizing different components of the JNK pathway, including RAC1 or RAC2, MAP3K11/MLK3 or MAP3K7/TAK1, MAP2K7/MKK7, MAPK8/JNK1 and/or MAPK9/JNK2 into a functional multiprotein complex to ensure the effective activation of the JNK signaling pathway. Regulates the differentiation of CD4(+) and CD8(+) T-cells and promotes T-helper 1 (Th1) cell differentiation. Regulates the activation of MAPK8/JNK1 and MAPK9/JNK2 in CD4(+) T-cells and the activation of MAPK8/JNK1 in CD8(+) T-cells. Plays a crucial role in the migration of neocortical neurons in the developing brain. Controls proper cortical neuronal migration and the formation of proximal cytoplasmic dilation in the leading process (PCDLP) in migratory neocortical neurons by regulating the proper localization of activated RAC1 and F-actin assembly. The chain is E3 ubiquitin-protein ligase SH3RF1 (SH3RF1) from Bos taurus (Bovine).